The primary structure comprises 2467 residues: Transcription factor TFIIIB component B'' homolog (2467 aa).

Disordered stretches follow at residues 1 to 145 (MFRR…RYRI) and 159 to 243 (LRKE…VDDG). Residues 1-301 (MFRRARLSVK…TYSSFRKNYY (301 aa)) form an interaction with ZBTB43 region. Low complexity predominate over residues 81–92 (AAESSTLSSASS). A compositionally biased stretch (polar residues) spans 99–118 (SSTSSLVQPSGSAPSQSRPL). 2 stretches are compositionally biased toward basic and acidic residues: residues 133-144 (AKEKQPCSDRYR) and 177-186 (RPPDRSKMTM). Residues 144 to 177 (RIYKARKLREMLKEELRKEKKQWKNKFSTNESQR) adopt a coiled-coil conformation. Positions 231-242 (NDNEDVEEEVDD) are enriched in acidic residues. Residues 297 to 347 (RKNYYSKPWSNKETDMFFLAISMVGTDFSMIGQLFPHRARIEIKNKFKREE) form the Myb-like domain. Residues 357–472 (AFQEKRPFDF…QEKKRRRNQG (116 aa)) are required for phosphorylation by CSNK2A1. Disordered stretches follow at residues 380–513 (EEKR…ECNK), 576–720 (SADM…VKAA), 748–844 (PPQT…PATW), 866–893 (LTAT…NAEM), 971–1200 (LQEN…SSKI), 1231–1270 (LGRH…VKPA), 1318–1388 (DSDQ…LVPI), 1409–1448 (LPVR…PELQ), 1527–1561 (KAKP…EDHL), 1592–1706 (IHSE…RASK), 1902–1926 (IVSK…LPTR), 1977–2014 (IQRE…QCVG), 2058–2083 (LDSG…SDVP), 2179–2206 (LVVQ…DLTS), 2260–2290 (GIFP…SGSL), and 2304–2449 (LPQS…EEVT). Positions 458–487 (EQDQNQEKKRRRNQGEANKQEATNLLERVL) form a coiled coil. The segment covering 649 to 660 (AAEKNHMEKETM) has biased composition (basic and acidic residues). Residues 809-824 (RFQKPKPNTGRRRRRI) show a composition bias toward basic residues. Basic and acidic residues-rich tracts occupy residues 873–884 (KDSESDVKDSGR), 992–1002 (TGKDLAMKEST), 1009–1041 (TEER…RGEM), 1089–1098 (EGKELNLRET), 1112–1130 (EKTD…ERES), and 1150–1170 (DLGK…EEHS). 4 stretches are compositionally biased toward polar residues: residues 1180-1200 (LSSS…SSKI), 1251-1265 (DTNL…QQPL), 1318-1330 (DSDQ…QHNV), and 1364-1382 (PPNS…NQEN). Composition is skewed to basic and acidic residues over residues 1429-1448 (QIVE…PELQ), 1536-1561 (RRKD…EDHL), and 1592-1603 (IHSEESGSDRND). 2 stretches are compositionally biased toward polar residues: residues 1621 to 1642 (EQPT…SSCP) and 1650 to 1665 (YPKT…SSAS). Residues 1688 to 1697 (RGSKRIRGKT) show a composition bias toward basic residues. Basic and acidic residues-rich tracts occupy residues 1902 to 1913 (IVSKEQSNRDAA), 1977 to 1996 (IQRE…DKSH), and 2068 to 2078 (AAKEALKETPK). Residues 2185-2199 (PSLSPSRSGSSEKPP) are compositionally biased toward low complexity. Polar residues-rich tracts occupy residues 2262 to 2273 (FPTSESTHATSK), 2319 to 2334 (PASN…SSSK), and 2414 to 2429 (TAGS…SSDQ).

Component of TFIIIB complex. The TFIIIB complex has two activities, alpha and beta. The TFIIIB-alpha and TFIIIB-beta activities are required for transcription of genes with TFIIIC-bound internal promoters and PSE transcription factor-bound external promoters, respectively. The TFIIIB-alpha activity complex is composed of TBP, BDP1, and a complex containing both BRF2 and at least four stably associated proteins; YY1 facilitates the formation of TFIIIB-alpha activity complex. The TFIIIB-beta activity complex is composed of TBP, BDP1, and BRF1. Interacts with BRF1; this interaction diminishes during mitosis resulting in the release of BDP1 from chromosomal templates. Component of TFIIIC complex. The TFIIIC complex has two activities, C1 and C2. The TFIIIC2 activity complex is only required for transcription of the 'classical' pol III genes whereas the TFIIIC1 activity complex is required for transcription of all pol III genes. The TFIIIC1 activity complex is composed at least of BDP1. Interacts with ZBTB43. Phosphorylated by CSNK2A1 during mitosis, resulting in its release from chromatin and suppression of polymerase III transcription. In terms of tissue distribution, expressed in the cochlea, particularly in the spiral ligament, the capillaries of the stria vascularis and the basilar membrane.

Its subcellular location is the nucleus. General activator of RNA polymerase III transcription. Requires for transcription from all three types of polymerase III promoters. Requires for transcription of genes with internal promoter elements and with promoter elements upstream of the initiation site. The polypeptide is Transcription factor TFIIIB component B'' homolog (Bdp1) (Mus musculus (Mouse)).